A 91-amino-acid polypeptide reads, in one-letter code: UPF0512 protein E (91 aa).

Residues 1-25 (MAIFKSISSISNSTSAMGSSNSTSN) show a composition bias toward low complexity. Residues 1-26 (MAIFKSISSISNSTSAMGSSNSTSNR) are disordered.

The protein belongs to the UPF0512 family.

This is UPF0512 protein E from Dictyostelium discoideum (Social amoeba).